Consider the following 118-residue polypeptide: Peptidyl-prolyl cis-trans isomerase Pin1 (118 aa).

Disordered regions lie at residues 1–37 and 61–84; these read MSSEKVRASHILIKHQGSRRKSSWKDPDGSLISATTR and LASRHSHCSSAKRGGDLGPFGRGQ. One can recognise a PpiC domain in the interval 3-118; it reads SEKVRASHIL…SGVHIIKRTG (116 aa). Residues 12–22 are compositionally biased toward basic residues; it reads LIKHQGSRRKS.

The protein belongs to the PpiC/parvulin rotamase family. Post-translationally, the N-terminus is blocked. As to expression, expressed in roots, stems, leaves, flowers and seedlings.

The protein localises to the cytoplasm. Its subcellular location is the nucleus. It catalyses the reaction [protein]-peptidylproline (omega=180) = [protein]-peptidylproline (omega=0). Inhibited in vitro by juglone. Prolyl cis/trans isomerase with specificity for phospho-Ser-Pro bonds. The chain is Peptidyl-prolyl cis-trans isomerase Pin1 (PARV12.8) from Digitalis lanata (Grecian foxglove).